The chain runs to 72 residues: Small ribosomal subunit protein bS18c (72 aa).

Belongs to the bacterial ribosomal protein bS18 family. In terms of assembly, part of the 30S ribosomal subunit.

The protein resides in the plastid. The protein localises to the chloroplast. This is Small ribosomal subunit protein bS18c from Thalassiosira pseudonana (Marine diatom).